A 206-amino-acid polypeptide reads, in one-letter code: MNLTPAQERVYGFVRDYIQKNGYSPSYEEIRQNLGFRSLNAVFKHLKQLEQRGYVQSLWKNKKRALELLPLHTGAVSIPFLGVVAAGTPIEAVEIPESVEVPESFLANGNNFALRVKGDSMIEEGIREGDILIVARQSRAENGQTVVALVQGEATVKKFYQRGEEIELRPANSRMQPIHARADAVEVVGTVVGLLRNYRRRSLGVV.

Positions 27-47 form a DNA-binding region, H-T-H motif; it reads YEEIRQNLGFRSLNAVFKHLK. Active-site for autocatalytic cleavage activity residues include S120 and K157.

The protein belongs to the peptidase S24 family. As to quaternary structure, homodimer.

It carries out the reaction Hydrolysis of Ala-|-Gly bond in repressor LexA.. In terms of biological role, represses a number of genes involved in the response to DNA damage (SOS response), including recA and lexA. In the presence of single-stranded DNA, RecA interacts with LexA causing an autocatalytic cleavage which disrupts the DNA-binding part of LexA, leading to derepression of the SOS regulon and eventually DNA repair. This is LexA repressor from Syntrophobacter fumaroxidans (strain DSM 10017 / MPOB).